The following is a 271-amino-acid chain: Eukaryotic translation initiation factor 3 subunit G (271 aa).

Disordered regions lie at residues 1–26 (MSTT…TNPD), 63–119 (AQRK…AQKL), and 147–187 (TTSS…RDDS). Serine 77 carries the post-translational modification Phosphoserine. Positions 188-267 (TTLKVSQLNS…LILHLEWSKK (80 aa)) constitute an RRM domain.

Belongs to the eIF-3 subunit G family. Component of the eukaryotic translation initiation factor 3 (eIF-3) complex.

The protein resides in the cytoplasm. In terms of biological role, RNA-binding component of the eukaryotic translation initiation factor 3 (eIF-3) complex, which is involved in protein synthesis of a specialized repertoire of mRNAs and, together with other initiation factors, stimulates binding of mRNA and methionyl-tRNAi to the 40S ribosome. The eIF-3 complex specifically targets and initiates translation of a subset of mRNAs involved in cell proliferation. This subunit can bind 18S rRNA. In Scheffersomyces stipitis (strain ATCC 58785 / CBS 6054 / NBRC 10063 / NRRL Y-11545) (Yeast), this protein is Eukaryotic translation initiation factor 3 subunit G.